Consider the following 310-residue polypeptide: MNVGILGIGRYVPEKVVTNHDLEKIMDTSDEWIRTRTGIAERRIADDTIDTSYMAVEASKKALEDAGISGEDIDLILVATVTPDRAFPAVACVIQEAIGAKHAAAMDLSAACAGFMYGMITAQQFIQTGTYKNVLVVGSDKLSKIVDWNDRNTAVLFGDGAGAIVMGAVSEGKGVLSFELGADGSGGKHLYQDEYVMMNGREVFKFAVRQLGDSCLRVLDKAGLTKEDVDFLVPHQANIRIMESARERLNLPQEKMSMTIEKFGNTSASSIPIAMVEELQNGRIQDGDLIILVGFGGGLTWGAVALRWGK.

Catalysis depends on residues cysteine 112 and histidine 235. Positions 236 to 240 (QANIR) are ACP-binding. Asparagine 265 is an active-site residue.

This sequence belongs to the thiolase-like superfamily. FabH family. As to quaternary structure, homodimer.

It localises to the cytoplasm. The enzyme catalyses malonyl-[ACP] + acetyl-CoA + H(+) = 3-oxobutanoyl-[ACP] + CO2 + CoA. It functions in the pathway lipid metabolism; fatty acid biosynthesis. Catalyzes the condensation reaction of fatty acid synthesis by the addition to an acyl acceptor of two carbons from malonyl-ACP. Catalyzes the first condensation reaction which initiates fatty acid synthesis and may therefore play a role in governing the total rate of fatty acid production. Possesses both acetoacetyl-ACP synthase and acetyl transacylase activities. Its substrate specificity determines the biosynthesis of branched-chain and/or straight-chain of fatty acids. In Bacillus anthracis, this protein is Beta-ketoacyl-[acyl-carrier-protein] synthase III 1.